A 211-amino-acid chain; its full sequence is Phosphoserine phosphatase 1 (211 aa).

Catalysis depends on His9, which acts as the Tele-phosphohistidine intermediate. His150 is a catalytic residue.

Belongs to the histidine phosphatase superfamily. Metal-independent phosphoserine phosphatase family. In terms of assembly, homodimer. Can also form a heterodimer with PspB.

It catalyses the reaction O-phospho-L-serine + H2O = L-serine + phosphate. The catalysed reaction is O-phospho-D-serine + H2O = D-serine + phosphate. It functions in the pathway amino-acid biosynthesis; L-serine biosynthesis; L-serine from 3-phospho-D-glycerate: step 3/3. Its activity is regulated as follows. Activity is not inhibited by EDTA in vitro, nor enhanced by the addition of Mg(2+). Its function is as follows. Catalyzes the dephosphorylation of L-phosphoserine to serine and inorganic phosphate. Is poorly or not active toward D-phosphoserine, DL-phosphothreonine, 3-phosphoglycerate, para-nitrophenylphosphate, and fructose-6-phosphate. Does not display phosphoglycerate mutase activity. This chain is Phosphoserine phosphatase 1 (pspA), found in Hydrogenobacter thermophilus (strain DSM 6534 / IAM 12695 / TK-6).